The following is a 324-amino-acid chain: Acetyl-coenzyme A carboxylase carboxyl transferase subunit beta (324 aa).

Residues 28-297 (LWCKCPSCNA…AVAPAAAKAP (270 aa)) form the CoA carboxyltransferase N-terminal domain. Zn(2+)-binding residues include cysteine 32, cysteine 35, cysteine 51, and cysteine 54. The C4-type zinc-finger motif lies at 32–54 (CPSCNAILYKSEVERNLEVCPKC).

It belongs to the AccD/PCCB family. Acetyl-CoA carboxylase is a heterohexamer composed of biotin carboxyl carrier protein (AccB), biotin carboxylase (AccC) and two subunits each of ACCase subunit alpha (AccA) and ACCase subunit beta (AccD). Requires Zn(2+) as cofactor.

Its subcellular location is the cytoplasm. It carries out the reaction N(6)-carboxybiotinyl-L-lysyl-[protein] + acetyl-CoA = N(6)-biotinyl-L-lysyl-[protein] + malonyl-CoA. It participates in lipid metabolism; malonyl-CoA biosynthesis; malonyl-CoA from acetyl-CoA: step 1/1. Component of the acetyl coenzyme A carboxylase (ACC) complex. Biotin carboxylase (BC) catalyzes the carboxylation of biotin on its carrier protein (BCCP) and then the CO(2) group is transferred by the transcarboxylase to acetyl-CoA to form malonyl-CoA. The polypeptide is Acetyl-coenzyme A carboxylase carboxyl transferase subunit beta (Methylococcus capsulatus (strain ATCC 33009 / NCIMB 11132 / Bath)).